An 883-amino-acid chain; its full sequence is Pyruvate, phosphate dikinase 2 (883 aa).

Positions 1–21 (MAPAPCGRSSQRVFHFGKGKS) are disordered. The active-site Tele-phosphohistidine intermediate is H465. Positions 571, 628, 757, 778, 779, 780, and 781 each coordinate substrate. Position 757 (E757) interacts with Mg(2+). Mg(2+) is bound at residue D781. The active-site Proton donor is the C843.

The protein belongs to the PEP-utilizing enzyme family. The cofactor is Mg(2+). In terms of tissue distribution, expressed in leaves, roots and stems.

It is found in the cytoplasm. It carries out the reaction pyruvate + phosphate + ATP = phosphoenolpyruvate + AMP + diphosphate + H(+). In terms of biological role, formation of phosphoenolpyruvate, which is the primary acceptor of CO(2) in C4 and some Crassulacean acid metabolism plants. The sequence is that of Pyruvate, phosphate dikinase 2 from Zea mays (Maize).